We begin with the raw amino-acid sequence, 129 residues long: Small ribosomal subunit protein uS8 (129 aa).

Belongs to the universal ribosomal protein uS8 family. In terms of assembly, part of the 30S ribosomal subunit. Contacts proteins S5 and S12.

Functionally, one of the primary rRNA binding proteins, it binds directly to 16S rRNA central domain where it helps coordinate assembly of the platform of the 30S subunit. The polypeptide is Small ribosomal subunit protein uS8 (Spiroplasma kunkelii).